A 325-amino-acid chain; its full sequence is Glutarate 2-hydroxylase (325 aa).

H160, D162, and H292 together coordinate Fe cation.

Belongs to the glutarate hydroxylase family. In terms of assembly, homotetramer. Fe(2+) is required as a cofactor.

It carries out the reaction glutarate + 2-oxoglutarate + O2 = (S)-2-hydroxyglutarate + succinate + CO2. Its pathway is amino-acid degradation. In terms of biological role, acts as an alpha-ketoglutarate-dependent dioxygenase catalyzing hydroxylation of glutarate (GA) to L-2-hydroxyglutarate (L2HG). Functions in a L-lysine degradation pathway that proceeds via cadaverine, glutarate and L-2-hydroxyglutarate. In Citrobacter koseri (strain ATCC BAA-895 / CDC 4225-83 / SGSC4696), this protein is Glutarate 2-hydroxylase.